The chain runs to 245 residues: 3-deoxy-manno-octulosonate cytidylyltransferase (245 aa).

The protein belongs to the KdsB family.

The protein resides in the cytoplasm. The catalysed reaction is 3-deoxy-alpha-D-manno-oct-2-ulosonate + CTP = CMP-3-deoxy-beta-D-manno-octulosonate + diphosphate. The protein operates within nucleotide-sugar biosynthesis; CMP-3-deoxy-D-manno-octulosonate biosynthesis; CMP-3-deoxy-D-manno-octulosonate from 3-deoxy-D-manno-octulosonate and CTP: step 1/1. It participates in bacterial outer membrane biogenesis; lipopolysaccharide biosynthesis. Its function is as follows. Activates KDO (a required 8-carbon sugar) for incorporation into bacterial lipopolysaccharide in Gram-negative bacteria. The sequence is that of 3-deoxy-manno-octulosonate cytidylyltransferase from Rhodopseudomonas palustris (strain BisB5).